A 141-amino-acid polypeptide reads, in one-letter code: Flagellar assembly factor FliW (141 aa).

Belongs to the FliW family. Interacts with translational regulator CsrA and flagellin(s).

It is found in the cytoplasm. Functionally, acts as an anti-CsrA protein, binds CsrA and prevents it from repressing translation of its target genes, one of which is flagellin. Binds to flagellin and participates in the assembly of the flagellum. This chain is Flagellar assembly factor FliW, found in Clostridium beijerinckii (strain ATCC 51743 / NCIMB 8052) (Clostridium acetobutylicum).